A 1507-amino-acid polypeptide reads, in one-letter code: Chromatin-remodeling ATPase INO80 (1507 aa).

2 disordered regions span residues 30 to 82 (PEDE…DAED) and 428 to 452 (RKKQ…KRQQ). Polar residues predominate over residues 38 to 67 (GSSSQDESRSTQGGVVANYSNGSKSRMNAS). Residues 350-475 (AWINIVRRDI…SHFMQNKTDS (126 aa)) form the DBINO domain. Residues 428–450 (RKKQEKEAAEAFKREQEQRESKR) show a composition bias toward basic and acidic residues. The 172-residue stretch at 598–769 (VNCYEQGLNG…WALLHFIMPM (172 aa)) folds into the Helicase ATP-binding domain. An ATP-binding site is contributed by 611-618 (DEMGLGKT). The region spanning 1210 to 1360 (TLDILLKRLR…QLVMTGGHVQ (151 aa)) is the Helicase C-terminal domain. Positions 1415-1507 (LEELEDVDRQ…KGFDPSSSAN (93 aa)) are disordered. The segment covering 1491-1507 (ASVTESNKGFDPSSSAN) has biased composition (polar residues).

It belongs to the SNF2/RAD54 helicase family. As to quaternary structure, component of the INO80 chromatin-remodeling complex. Associates with REF6/EIN6.

It is found in the nucleus. The catalysed reaction is ATP + H2O = ADP + phosphate + H(+). ATPase component of the chromatin remodeling INO80 complex which is involved in transcriptional regulation, DNA replication and DNA repair. Binds DNA. As part of the INO80 complex, remodels chromatin by shifting nucleosomes. The INO80 complex controls ethylene-induced H2A.Z eviction dynamics. Positive regulator of homologous recombination, but not an essential component of homologous recombination. Not involved in the illegitimate repair pathway. This is Chromatin-remodeling ATPase INO80 from Arabidopsis thaliana (Mouse-ear cress).